Reading from the N-terminus, the 227-residue chain is Cytochrome c oxidase subunit 2 (227 aa).

Over 1–14 (MAHAAQVGLQDATS) the chain is Mitochondrial intermembrane. The chain crosses the membrane as a helical span at residues 15–45 (PIMEELIIFHDHALMIIFLICFLVLYALFLT). The Mitochondrial matrix portion of the chain corresponds to 46–59 (LTTKLTNTSISDAQ). Residues 60-87 (EMETVWTILPAIILVLIALPSLRILYMT) traverse the membrane as a helical segment. At 88–227 (DEVNDPSFTI…IFEMGPVFTL (140 aa)) the chain is on the mitochondrial intermembrane side. His-161, Cys-196, Glu-198, Cys-200, His-204, and Met-207 together coordinate Cu cation. Glu-198 provides a ligand contact to Mg(2+).

This sequence belongs to the cytochrome c oxidase subunit 2 family. In terms of assembly, component of the cytochrome c oxidase (complex IV, CIV), a multisubunit enzyme composed of 14 subunits. The complex is composed of a catalytic core of 3 subunits MT-CO1, MT-CO2 and MT-CO3, encoded in the mitochondrial DNA, and 11 supernumerary subunits COX4I, COX5A, COX5B, COX6A, COX6B, COX6C, COX7A, COX7B, COX7C, COX8 and NDUFA4, which are encoded in the nuclear genome. The complex exists as a monomer or a dimer and forms supercomplexes (SCs) in the inner mitochondrial membrane with NADH-ubiquinone oxidoreductase (complex I, CI) and ubiquinol-cytochrome c oxidoreductase (cytochrome b-c1 complex, complex III, CIII), resulting in different assemblies (supercomplex SCI(1)III(2)IV(1) and megacomplex MCI(2)III(2)IV(2)). Found in a complex with TMEM177, COA6, COX18, COX20, SCO1 and SCO2. Interacts with TMEM177 in a COX20-dependent manner. Interacts with COX20. Interacts with COX16. The cofactor is Cu cation.

The protein resides in the mitochondrion inner membrane. It catalyses the reaction 4 Fe(II)-[cytochrome c] + O2 + 8 H(+)(in) = 4 Fe(III)-[cytochrome c] + 2 H2O + 4 H(+)(out). Functionally, component of the cytochrome c oxidase, the last enzyme in the mitochondrial electron transport chain which drives oxidative phosphorylation. The respiratory chain contains 3 multisubunit complexes succinate dehydrogenase (complex II, CII), ubiquinol-cytochrome c oxidoreductase (cytochrome b-c1 complex, complex III, CIII) and cytochrome c oxidase (complex IV, CIV), that cooperate to transfer electrons derived from NADH and succinate to molecular oxygen, creating an electrochemical gradient over the inner membrane that drives transmembrane transport and the ATP synthase. Cytochrome c oxidase is the component of the respiratory chain that catalyzes the reduction of oxygen to water. Electrons originating from reduced cytochrome c in the intermembrane space (IMS) are transferred via the dinuclear copper A center (CU(A)) of subunit 2 and heme A of subunit 1 to the active site in subunit 1, a binuclear center (BNC) formed by heme A3 and copper B (CU(B)). The BNC reduces molecular oxygen to 2 water molecules using 4 electrons from cytochrome c in the IMS and 4 protons from the mitochondrial matrix. This Pan troglodytes (Chimpanzee) protein is Cytochrome c oxidase subunit 2 (MT-CO2).